The primary structure comprises 94 residues: Co-chaperonin GroES (94 aa).

The protein belongs to the GroES chaperonin family. As to quaternary structure, heptamer of 7 subunits arranged in a ring. Interacts with the chaperonin GroEL.

The protein localises to the cytoplasm. Together with the chaperonin GroEL, plays an essential role in assisting protein folding. The GroEL-GroES system forms a nano-cage that allows encapsulation of the non-native substrate proteins and provides a physical environment optimized to promote and accelerate protein folding. GroES binds to the apical surface of the GroEL ring, thereby capping the opening of the GroEL channel. The sequence is that of Co-chaperonin GroES from Brevibacillus choshinensis.